Consider the following 239-residue polypeptide: Sugar fermentation stimulation protein homolog (239 aa).

The protein belongs to the SfsA family.

The sequence is that of Sugar fermentation stimulation protein homolog from Alcanivorax borkumensis (strain ATCC 700651 / DSM 11573 / NCIMB 13689 / SK2).